Here is a 371-residue protein sequence, read N- to C-terminus: 4-hydroxy-3-methylbut-2-en-1-yl diphosphate synthase (flavodoxin) (371 aa).

The [4Fe-4S] cluster site is built by C270, C273, C305, and E312.

The protein belongs to the IspG family. Requires [4Fe-4S] cluster as cofactor.

The enzyme catalyses (2E)-4-hydroxy-3-methylbut-2-enyl diphosphate + oxidized [flavodoxin] + H2O + 2 H(+) = 2-C-methyl-D-erythritol 2,4-cyclic diphosphate + reduced [flavodoxin]. It functions in the pathway isoprenoid biosynthesis; isopentenyl diphosphate biosynthesis via DXP pathway; isopentenyl diphosphate from 1-deoxy-D-xylulose 5-phosphate: step 5/6. Converts 2C-methyl-D-erythritol 2,4-cyclodiphosphate (ME-2,4cPP) into 1-hydroxy-2-methyl-2-(E)-butenyl 4-diphosphate. The protein is 4-hydroxy-3-methylbut-2-en-1-yl diphosphate synthase (flavodoxin) of Shewanella frigidimarina (strain NCIMB 400).